A 429-amino-acid chain; its full sequence is Histidine--tRNA ligase (429 aa).

It belongs to the class-II aminoacyl-tRNA synthetase family. As to quaternary structure, homodimer.

Its subcellular location is the cytoplasm. The enzyme catalyses tRNA(His) + L-histidine + ATP = L-histidyl-tRNA(His) + AMP + diphosphate + H(+). The sequence is that of Histidine--tRNA ligase from Streptococcus pneumoniae serotype 19F (strain G54).